Here is a 395-residue protein sequence, read N- to C-terminus: Acetyl-CoA acetyltransferase (395 aa).

Catalysis depends on cysteine 90, which acts as the Acyl-thioester intermediate. The CoA site is built by tyrosine 185 and lysine 230. Tyrosine 185 is a binding site for K(+). K(+) is bound by residues alanine 246, alanine 247, and alanine 249. Serine 250 contributes to the CoA binding site. Valine 347 serves as a coordination point for K(+). Active-site proton acceptor residues include histidine 351 and cysteine 381.

This sequence belongs to the thiolase-like superfamily. Thiolase family. As to quaternary structure, homotetramer.

Its subcellular location is the cytoplasm. It carries out the reaction 2 acetyl-CoA = acetoacetyl-CoA + CoA. It functions in the pathway metabolic intermediate biosynthesis; (R)-mevalonate biosynthesis; (R)-mevalonate from acetyl-CoA: step 1/3. In terms of biological role, acetyl-CoA acetyltransferase; part of the first module of ergosterol biosynthesis pathway that includes the early steps of the pathway, conserved across all eukaryotes, and which results in the formation of mevalonate from acetyl-coenzyme A (acetyl-CoA). Erg10 catalyzes the formation of acetoacetyl-CoA from acetyl-CoA. The first module starts with the action of the cytosolic acetyl-CoA acetyltransferase eg10 that catalyzes the formation of acetoacetyl-CoA. The hydroxymethylglutaryl-CoA synthases erg13 then condenses acetyl-CoA with acetoacetyl-CoA to form HMG-CoA. The rate-limiting step of the early module is the reduction to mevalonate by the 3-hydroxy-3-methylglutaryl-coenzyme A (HMG-CoA) reductases hcs1. The sequence is that of Acetyl-CoA acetyltransferase (erg10) from Schizosaccharomyces pombe (strain 972 / ATCC 24843) (Fission yeast).